The sequence spans 130 residues: MVNETEALPCEGGCGLYGTRVNNNLCSLCYKKSVLQHSPALRFEPETEQSQCCPPTNSPAVEEEPVKKRRCGICKRKVGMLGFKCRCGHMFCGSHRYPEEHSCPFDYKQSGRLALATQLPLIRADKLQRF.

An A20-type zinc finger spans residues 4–38 (ETEALPCEGGCGLYGTRVNNNLCSLCYKKSVLQHS). Residues Cys10, Cys14, Cys26, Cys29, Cys71, Cys74, Cys85, Cys87, Cys92, His95, His101, and Cys103 each coordinate Zn(2+). The segment at 65-111 (PVKKRRCGICKRKVGMLGFKCRCGHMFCGSHRYPEEHSCPFDYKQSG) adopts an AN1-type zinc-finger fold.

May be involved in environmental stress response. This is Zinc finger A20 and AN1 domain-containing stress-associated protein 10 (SAP10) from Arabidopsis thaliana (Mouse-ear cress).